The sequence spans 1399 residues: DNA-directed RNA polymerase subunit beta' (1399 aa).

Positions 70, 72, 85, and 88 each coordinate Zn(2+). Positions 460, 462, and 464 each coordinate Mg(2+). 4 residues coordinate Zn(2+): Cys-814, Cys-888, Cys-895, and Cys-898.

Belongs to the RNA polymerase beta' chain family. In terms of assembly, the RNAP catalytic core consists of 2 alpha, 1 beta, 1 beta' and 1 omega subunit. When a sigma factor is associated with the core the holoenzyme is formed, which can initiate transcription. Requires Mg(2+) as cofactor. Zn(2+) serves as cofactor.

The catalysed reaction is RNA(n) + a ribonucleoside 5'-triphosphate = RNA(n+1) + diphosphate. In terms of biological role, DNA-dependent RNA polymerase catalyzes the transcription of DNA into RNA using the four ribonucleoside triphosphates as substrates. The polypeptide is DNA-directed RNA polymerase subunit beta' (Pseudomonas putida (strain ATCC 47054 / DSM 6125 / CFBP 8728 / NCIMB 11950 / KT2440)).